The primary structure comprises 374 residues: Chaperone protein DnaJ (374 aa).

A J domain is found at 5–70 (DYYEVLGVER…SKRAAFDQYG (66 aa)). The CR-type zinc-finger motif lies at 133-211 (GTTVSIRVPT…CHGEGRVEEY (79 aa)). Zn(2+) contacts are provided by Cys146, Cys149, Cys163, Cys166, Cys185, Cys188, Cys199, and Cys202. CXXCXGXG motif repeat units follow at residues 146–153 (CQPCDGSG), 163–170 (CPTCGGIG), 185–192 (CPRCHGQG), and 199–206 (CTSCHGEG).

The protein belongs to the DnaJ family. As to quaternary structure, homodimer. The cofactor is Zn(2+).

The protein localises to the cytoplasm. Functionally, participates actively in the response to hyperosmotic and heat shock by preventing the aggregation of stress-denatured proteins and by disaggregating proteins, also in an autonomous, DnaK-independent fashion. Unfolded proteins bind initially to DnaJ; upon interaction with the DnaJ-bound protein, DnaK hydrolyzes its bound ATP, resulting in the formation of a stable complex. GrpE releases ADP from DnaK; ATP binding to DnaK triggers the release of the substrate protein, thus completing the reaction cycle. Several rounds of ATP-dependent interactions between DnaJ, DnaK and GrpE are required for fully efficient folding. Also involved, together with DnaK and GrpE, in the DNA replication of plasmids through activation of initiation proteins. This Pseudomonas putida (strain ATCC 700007 / DSM 6899 / JCM 31910 / BCRC 17059 / LMG 24140 / F1) protein is Chaperone protein DnaJ.